We begin with the raw amino-acid sequence, 196 residues long: Signaling threshold-regulating transmembrane adapter 1 (196 aa).

A signal peptide spans 1–24 (MNQADPRLRAVCLWTLTSAAMSRG). Residues 25–40 (DNCTDLLALGIPSITQ) lie on the Extracellular side of the membrane. The N-linked (GlcNAc...) asparagine glycan is linked to Asn26. A helical membrane pass occupies residues 41–61 (AWGLWVLLGAVTLLFLISLAA). The Cytoplasmic portion of the chain corresponds to 62–196 (HLSQWTRGRS…AYANSQPAAS (135 aa)). Ser80 and Ser83 each carry phosphoserine. Tyr90 carries the post-translational modification Phosphotyrosine. Positions 90–93 (YGNL) are interaction with GRB2. Ser102 carries the phosphoserine modification. Tyr127 is subject to Phosphotyrosine. The disordered stretch occupies residues 132–167 (LRPPQGRIPGPGTPVKYSEVVLDSEPKSQASGPEPE). The residue at position 144 (Thr144) is a Phosphothreonine. The segment at 146 to 151 (VKYSEV) is interaction with PTPN11. Phosphotyrosine is present on residues Tyr148 and Tyr169. The tract at residues 169–172 (YASV) is interaction with CSK. Residue Ser182 is modified to Phosphoserine. Residue Tyr188 is modified to Phosphotyrosine. The interaction with GRB2 stretch occupies residues 188–191 (YANS).

Homodimer; disulfide-linked. When phosphorylated, interacts with PTPN11/SHP2, GRB2 and CSK. Post-translationally, phosphorylated on tyrosines by LCK, FYN or ZAP70 upon TCR activation; which leads to the recruitment of PTPN11, GRB2 and CSK. In terms of tissue distribution, specifically expressed in T- and B-cells. Present in plasma cells but not in germinal center B-cells (at protein level). Expressed in T- and B-cell lymphoma.

Its subcellular location is the cell membrane. Functionally, negatively regulates TCR (T-cell antigen receptor)-mediated signaling in T-cells. Involved in positive selection of T-cells. This is Signaling threshold-regulating transmembrane adapter 1 (SIT1) from Homo sapiens (Human).